Here is a 287-residue protein sequence, read N- to C-terminus: POU domain class 2-associating factor 2 (287 aa).

Residues 10-32 (KRVYQGVRVKHTVKDLLAEKRSR) form the OCA domain. 3 disordered regions span residues 24–51 (DLLAEKRSRQTSNTRLNGSVSSSQPPFI), 161–199 (TVPDGLSQPDPMPADALQSLPPSTSCLSQLESGSSTQHR), and 247–279 (PKVGPLSPEEGSDVSSLHDPSPWTKEDGSMAWG). 2 stretches are compositionally biased toward polar residues: residues 33 to 49 (QTSNTRLNGSVSSSQPP) and 180 to 199 (LPPSTSCLSQLESGSSTQHR).

The protein belongs to the POU2AF family. Interacts with POU2F3 (via the POU domain) in a DNA-dependent manner; this interaction recruits POU2AF2 to chromatin and increases POU2F3 transactivation activity. As to expression, expressed in tuft cells of the small intestine, trachea, thymus, and colon.

Its subcellular location is the cytoplasm. It localises to the cytosol. The protein resides in the nucleus. In terms of biological role, transcriptional coactivator of POU2F3. This complex drives the development of tuft cells, a rare chemosensory cells that coordinate immune and neural functions within mucosal epithelial tissues. This chain is POU domain class 2-associating factor 2, found in Mus musculus (Mouse).